The primary structure comprises 315 residues: tRNA wybutosine-synthesizing protein 5 (315 aa).

Residues 102–267 (DEKYYLRSLG…YDKTDTYGNK (166 aa)) enclose the JmjC domain. A 2-oxoglutarate-binding site is contributed by tyrosine 106. The Fe cation site is built by histidine 160 and aspartate 162. Residues asparagine 166 and lysine 175 each coordinate 2-oxoglutarate. Histidine 235 provides a ligand contact to Fe cation.

This sequence belongs to the TYW5 family. As to quaternary structure, homodimer. Fe(2+) is required as a cofactor.

The catalysed reaction is 7-[(3S)-3-amino-3-carboxypropyl]wyosine(37) in tRNA(Phe) + 2-oxoglutarate + O2 = 7-(2-hydroxy-3-amino-3-carboxypropyl)wyosine(37) in tRNA(Phe) + succinate + CO2. It functions in the pathway tRNA modification; wybutosine-tRNA(Phe) biosynthesis. Functionally, tRNA hydroxylase that acts as a component of the wybutosine biosynthesis pathway. Wybutosine is a hyper modified guanosine with a tricyclic base found at the 3'-position adjacent to the anticodon of eukaryotic phenylalanine tRNA. Catalyzes the hydroxylation of 7-(a-amino-a-carboxypropyl)wyosine (yW-72) into undermodified hydroxywybutosine (OHyW*). OHyW* being further transformed into hydroxywybutosine (OHyW) by LCMT2/TYW4. OHyW is a derivative of wybutosine found in higher eukaryotes. The polypeptide is tRNA wybutosine-synthesizing protein 5 (TYW5) (Homo sapiens (Human)).